The following is a 528-amino-acid chain: FAD-dependent monooxygenase DEP2 (528 aa).

Positions 1–23 are cleaved as a signal peptide; sequence MEDGRSTFKVIIIGAGVTGLTLA. The FAD site is built by Asp-37, Arg-110, Asp-311, and Gly-324. The helical transmembrane segment at 479-499 threads the bilayer; the sequence is VFPQILGVLMVMWSSVWLFHL. N-linked (GlcNAc...) asparagine glycosylation occurs at Asn-521.

It belongs to the paxM FAD-dependent monooxygenase family. The cofactor is FAD.

It localises to the membrane. The protein operates within polyketide biosynthesis. Functionally, FAD-dependent monooxygenase; part of the gene cluster that mediates the biosynthesis of depudecin, a highly oxidized eleven-carbon linear polyketide that acts as a histone deacetylase (HDAC) inhibitor and makes a small contribution to pathogenesis. The reducing polyketide synthase DEP5 is the central enzyme in depudecin biosynthesis by yielding the backbone polyketide chain. The monooxygenases DEP2 and DEP4, as well as the uncharacterized protein DEP1, then act as tailoring enzymes to modify the intermediate polyketide chain into depudecin. This chain is FAD-dependent monooxygenase DEP2, found in Alternaria brassicicola (Dark leaf spot agent).